A 191-amino-acid chain; its full sequence is Large ribosomal subunit protein uL5 (191 aa).

It belongs to the universal ribosomal protein uL5 family. Part of the 50S ribosomal subunit; part of the 5S rRNA/L5/L18/L25 subcomplex. Contacts the 5S rRNA and the P site tRNA. Forms a bridge to the 30S subunit in the 70S ribosome.

This is one of the proteins that bind and probably mediate the attachment of the 5S RNA into the large ribosomal subunit, where it forms part of the central protuberance. In the 70S ribosome it contacts protein S13 of the 30S subunit (bridge B1b), connecting the 2 subunits; this bridge is implicated in subunit movement. Contacts the P site tRNA; the 5S rRNA and some of its associated proteins might help stabilize positioning of ribosome-bound tRNAs. The protein is Large ribosomal subunit protein uL5 of Corynebacterium glutamicum (strain R).